A 294-amino-acid chain; its full sequence is tRNA pseudouridine synthase A (294 aa).

Residue D64 is the Nucleophile of the active site. Y122 contributes to the substrate binding site.

Belongs to the tRNA pseudouridine synthase TruA family. In terms of assembly, homodimer.

It catalyses the reaction uridine(38/39/40) in tRNA = pseudouridine(38/39/40) in tRNA. Its function is as follows. Formation of pseudouridine at positions 38, 39 and 40 in the anticodon stem and loop of transfer RNAs. This Synechococcus sp. (strain ATCC 27144 / PCC 6301 / SAUG 1402/1) (Anacystis nidulans) protein is tRNA pseudouridine synthase A.